The primary structure comprises 231 residues: Ureidoacrylate amidohydrolase RutB (231 aa).

The active-site Proton acceptor is D25. The active site involves K134. Catalysis depends on C167, which acts as the Nucleophile.

Belongs to the isochorismatase family. RutB subfamily.

It catalyses the reaction (Z)-3-ureidoacrylate + H2O + H(+) = (Z)-3-aminoacrylate + NH4(+) + CO2. The enzyme catalyses (Z)-3-ureidoacrylate + H2O = (Z)-3-aminoacrylate + carbamate + H(+). It carries out the reaction (Z)-2-methylureidoacrylate + H2O + H(+) = (Z)-2-methylaminoacrylate + NH4(+) + CO2. Its function is as follows. Hydrolyzes ureidoacrylate to form aminoacrylate and carbamate. The carbamate hydrolyzes spontaneously, thereby releasing one of the nitrogen atoms of the pyrimidine ring as ammonia and one of its carbon atoms as CO2. The protein is Ureidoacrylate amidohydrolase RutB of Escherichia coli O9:H4 (strain HS).